We begin with the raw amino-acid sequence, 187 residues long: MTSTPSPSTADPNSTNDWLPVGTLVGAQGLKGELRLNPASDFPERFTEPGTRWLQAKGSAPKEVELLEGRQLPGKSLYVVRLKGVNNRASAEALVGCTVLVPAKDRPELAEGEFHLLDLVGLEARLAGSDEPIGTVSNLISGGNDLLEIKLNSGKTVLVPFVEAIVPDVQLEEGWLLLTPPPGLLEL.

The span at 1–17 (MTSTPSPSTADPNSTND) shows a compositional bias: polar residues. Residues 1 to 21 (MTSTPSPSTADPNSTNDWLPV) form a disordered region. One can recognise a PRC barrel domain in the interval 111 to 184 (EGEFHLLDLV…WLLLTPPPGL (74 aa)).

The protein belongs to the RimM family. In terms of assembly, binds ribosomal protein uS19.

It localises to the cytoplasm. Functionally, an accessory protein needed during the final step in the assembly of 30S ribosomal subunit, possibly for assembly of the head region. Essential for efficient processing of 16S rRNA. May be needed both before and after RbfA during the maturation of 16S rRNA. It has affinity for free ribosomal 30S subunits but not for 70S ribosomes. This is Ribosome maturation factor RimM from Synechococcus sp. (strain CC9311).